A 309-amino-acid chain; its full sequence is Probable WRKY transcription factor 26 (309 aa).

A disordered region spans residues 1-24 (MGSFDRQRAVPKFKTATPSPLPLS). The segment at residues 111–176 (SSNKTSDDGY…YKGSHNHPKP (66 aa)) is a DNA-binding region (WRKY 1). Zn(2+)-binding residues include Cys142, Cys147, His171, and His173. A disordered region spans residues 167–210 (YKGSHNHPKPQSTKRSSSTAIAAHQNSSNGDGKDIGEDETEAKR). Residues 175–196 (KPQSTKRSSSTAIAAHQNSSNG) show a composition bias toward polar residues. Over residues 197–210 (DGKDIGEDETEAKR) the composition is skewed to basic and acidic residues. The segment at residues 228–293 (SDIDILDDGY…YEGKHKHQIP (66 aa)) is a DNA-binding region (WRKY 2). Zn(2+) is bound by residues Cys259, Cys264, His288, and His290.

It belongs to the WRKY group I family. In terms of assembly, interacts with VQ10.

The protein resides in the nucleus. Transcription factor. Interacts specifically with the W box (5'-(T)TGAC[CT]-3'), a frequently occurring elicitor-responsive cis-acting element. Functions with WRKY25 and WRKY33 as positive regulator of plant thermotolerance by partially participating in ethylene-response signal transduction pathway. This Arabidopsis thaliana (Mouse-ear cress) protein is Probable WRKY transcription factor 26 (WRKY26).